Reading from the N-terminus, the 438-residue chain is sn-glycerol-3-phosphate-binding periplasmic protein UgpB (438 aa).

The N-terminal stretch at Met1 to Ala23 is a signal peptide. The sn-glycerol 3-phosphate site is built by Tyr65, Glu89, Ser144, Ser270, Gly307, Tyr346, and Arg397.

This sequence belongs to the bacterial solute-binding protein 1 family. The complex is composed of two ATP-binding proteins (UgpC), two transmembrane proteins (UgpA and UgpE) and a solute-binding protein (UgpB).

Its subcellular location is the periplasm. Its function is as follows. Part of the ABC transporter complex UgpBAEC involved in sn-glycerol-3-phosphate (G3P) import. Binds G3P. The chain is sn-glycerol-3-phosphate-binding periplasmic protein UgpB (ugpB) from Escherichia coli O6:K15:H31 (strain 536 / UPEC).